Here is a 101-residue protein sequence, read N- to C-terminus: Precursor of CEP6 (101 aa).

The signal sequence occupies residues 1–26; that stretch reads MKLSVYIILSILFISTVFYEIQFTEA. The propeptide occupies 27–48; sequence RQLRKTDDQDHDDHHFTVGYTD. Basic and acidic residues predominate over residues 29–42; the sequence is LRKTDDQDHDDHHF. The disordered stretch occupies residues 29–101; the sequence is LRKTDDQDHD…HAVKNNEPNA (73 aa). Residues proline 52, proline 55, and proline 59 each carry the hydroxyproline modification. A propeptide spanning residues 64-77 is cleaved from the precursor; sequence KMKENEENAGGYKD. The segment covering 64–79 has biased composition (basic and acidic residues); sequence KMKENEENAGGYKDDF. Proline 81, proline 84, and proline 88 each carry hydroxyproline. The propeptide occupies 93–101; the sequence is AVKNNEPNA.

This sequence belongs to the C-terminally encoded plant signaling peptide (CEP) family. Interacts with CEP receptors (e.g. CEPR1 and CEPR2). In terms of processing, the mature small signaling peptide is generated by proteolytic processing of the longer precursor. In terms of tissue distribution, expressed in lateral root primordia and in lateral roots excluding the meristem region. Also present in the aerial tissues, such as leaf petioles and the shoot apex region.

The protein localises to the secreted. The protein resides in the extracellular space. Its subcellular location is the apoplast. Its function is as follows. Extracellular signaling peptide that represses primary root growth rate. Modulates leaf morphology. Regulates systemic nitrogen (N)-demand signaling. Mediates up-regulation of genes involved in N uptake and assimilation pathways. The protein is Precursor of CEP6 of Arabidopsis thaliana (Mouse-ear cress).